A 514-amino-acid chain; its full sequence is Sugar transport protein 11 (514 aa).

Residues 1 to 19 are Cytoplasmic-facing; the sequence is MAGGAFIDESGHGGDYEGR. A helical membrane pass occupies residues 20–40; sequence VTAFVMITCIVAAMGGLLFGY. Over 41–82 the chain is Extracellular; that stretch reads DIGISGGVISMEDFLTKFFPDVLRQMQNKRGRETEYCKYDNE. A helical transmembrane segment spans residues 83–103; it reads LLTLFTSSLYLAALFASFLAS. Residues 104 to 112 lie on the Cytoplasmic side of the membrane; it reads TITRLFGRK. The helical transmembrane segment at 113-133 threads the bilayer; it reads VSMVIGSLAFLSGALLNGLAI. The Extracellular segment spans residues 134–137; sequence NLEM. The helical transmembrane segment at 138 to 158 threads the bilayer; the sequence is LIIGRLFLGVGVGFANQSVPL. At 159-169 the chain is on the cytoplasmic side; it reads YLSEMAPAKIR. A helical transmembrane segment spans residues 170–190; that stretch reads GALNIGFQLAITIGILAANIV. Residues 191–204 lie on the Extracellular side of the membrane; the sequence is NYVTPKLQNGIGWR. The chain crosses the membrane as a helical span at residues 205–225; it reads LSLGLAGVPAVMMLVGCFFLP. Residues 226–290 lie on the Cytoplasmic side of the membrane; the sequence is DTPNSILERG…RYRPQLTFCT (65 aa). The chain crosses the membrane as a helical span at residues 291-311; sequence FIPFFQQLTGINVIMFYAPVL. Residues 312–320 lie on the Extracellular side of the membrane; that stretch reads FKTIGFGND. A helical transmembrane segment spans residues 321–341; it reads ASLISAVITGLVNVLSTIVSI. Residues 342 to 350 are Cytoplasmic-facing; sequence YSVDKFGRR. The helical transmembrane segment at 351–371 threads the bilayer; sequence ALFLQGGFQMIVTQIAVGSMI. Topologically, residues 372–389 are extracellular; sequence GWKFGFNGEGNLSGVDAD. Residues 390–410 traverse the membrane as a helical segment; sequence IILALICLYVAGFAWSWGPLG. The Cytoplasmic portion of the chain corresponds to 411–428; it reads WLVPSEICPLEIRSAGQS. Residues 429–449 form a helical membrane-spanning segment; that stretch reads LNVSVNMFFTFFIGQFFLTML. Residues 450–453 are Extracellular-facing; sequence CHMK. The chain crosses the membrane as a helical span at residues 454 to 474; that stretch reads FGLFYFFAGMVLIMTIFIYFL. Topologically, residues 475 to 514 are cytoplasmic; the sequence is LPETKGVPIEEMGKVWKEHRYWGKYSNNDDGDDVDDDAYF.

Belongs to the major facilitator superfamily. Sugar transporter (TC 2.A.1.1) family. Specifically expressed in germinating pollen and pollen tube (at protein level).

The protein resides in the cell membrane. Its activity is regulated as follows. Inhibited by uncouplers such as 2,4-dinitrophenol and carbonyl cyanide-m-chlorophenyl-hydrazone. In terms of biological role, mediates an active uptake of hexoses, probably by sugar/hydrogen symport. Can transport glucose, galactose, mannose, xylose and 3-O-methylglucose, but not fructose and ribose. This chain is Sugar transport protein 11 (STP11), found in Arabidopsis thaliana (Mouse-ear cress).